A 517-amino-acid polypeptide reads, in one-letter code: Light-independent protochlorophyllide reductase subunit B (517 aa).

Asp36 is a [4Fe-4S] cluster binding site. The Proton donor role is filled by Asp285. Substrate is bound at residue Gly420 to Leu421.

This sequence belongs to the ChlB/BchB/BchZ family. Protochlorophyllide reductase is composed of three subunits; BchL, BchN and BchB. Forms a heterotetramer of two BchB and two BchN subunits. [4Fe-4S] cluster is required as a cofactor.

The enzyme catalyses chlorophyllide a + oxidized 2[4Fe-4S]-[ferredoxin] + 2 ADP + 2 phosphate = protochlorophyllide a + reduced 2[4Fe-4S]-[ferredoxin] + 2 ATP + 2 H2O. It functions in the pathway porphyrin-containing compound metabolism; bacteriochlorophyll biosynthesis (light-independent). In terms of biological role, component of the dark-operative protochlorophyllide reductase (DPOR) that uses Mg-ATP and reduced ferredoxin to reduce ring D of protochlorophyllide (Pchlide) to form chlorophyllide a (Chlide). This reaction is light-independent. The NB-protein (BchN-BchB) is the catalytic component of the complex. The polypeptide is Light-independent protochlorophyllide reductase subunit B (Bradyrhizobium sp. (strain BTAi1 / ATCC BAA-1182)).